Consider the following 78-residue polypeptide: MNLCLSALLFFLVILLPSGKGMFGNDGVKVRTCTSQKAVCFFGCPPGYRWIAFCHNILSCCKNMTRFQPPQAKDPWVH.

Residues 1–21 (MNLCLSALLFFLVILLPSGKG) form the signal peptide. 3 cysteine pairs are disulfide-bonded: cysteine 33–cysteine 60, cysteine 40–cysteine 54, and cysteine 44–cysteine 61.

Belongs to the beta-defensin family.

The protein resides in the secreted. Its function is as follows. Host defense peptide that exhibits antibacterial and antifungal activity. Exhibits antimicrobial activity against E.coli, S.aureus and C.albicans (in vitro). Has high lipopolysaccharide (LPS)-binding affinity, and may thereby be involved in immunoregulation through LPS neutralization. The protein is Defensin beta 136 (DEFB136) of Homo sapiens (Human).